The sequence spans 216 residues: Uridine kinase (216 aa).

16–23 contributes to the ATP binding site; it reads GASASGKS.

Belongs to the uridine kinase family.

Its subcellular location is the cytoplasm. The enzyme catalyses uridine + ATP = UMP + ADP + H(+). The catalysed reaction is cytidine + ATP = CMP + ADP + H(+). It participates in pyrimidine metabolism; CTP biosynthesis via salvage pathway; CTP from cytidine: step 1/3. Its pathway is pyrimidine metabolism; UMP biosynthesis via salvage pathway; UMP from uridine: step 1/1. This chain is Uridine kinase, found in Mannheimia succiniciproducens (strain KCTC 0769BP / MBEL55E).